The primary structure comprises 744 residues: Probable methylmalonyl-CoA mutase, mitochondrial (744 aa).

Residues 605–737 form the B12-binding domain; the sequence is QPRIMVAKMG…EKLEANLPEA (133 aa). Position 618 (H618) interacts with adenosylcob(III)alamin.

The protein belongs to the methylmalonyl-CoA mutase family. As to quaternary structure, homodimer. The cofactor is adenosylcob(III)alamin.

It is found in the mitochondrion matrix. The enzyme catalyses (R)-methylmalonyl-CoA = succinyl-CoA. Its function is as follows. Involved, in man, in the degradation of several amino acids, odd-chain fatty acids and cholesterol via propionyl-CoA to the tricarboxylic acid cycle. MCM has different functions in other species. The protein is Probable methylmalonyl-CoA mutase, mitochondrial (mmcm-1) of Caenorhabditis elegans.